The following is a 410-amino-acid chain: Elongation factor Tu (410 aa).

The 210-residue stretch at 10–219 folds into the tr-type G domain; that stretch reads KTHVNVGTIG…ALDTYIPDPV (210 aa). GTP contacts are provided by residues 19–26, 88–92, and 143–146; these read GHVDHGKT, DCPGH, and NKCD. T26 serves as a coordination point for Mg(2+).

It belongs to the TRAFAC class translation factor GTPase superfamily. Classic translation factor GTPase family. EF-Tu/EF-1A subfamily. In terms of assembly, monomer.

Its subcellular location is the cytoplasm. It catalyses the reaction GTP + H2O = GDP + phosphate + H(+). Its function is as follows. GTP hydrolase that promotes the GTP-dependent binding of aminoacyl-tRNA to the A-site of ribosomes during protein biosynthesis. The protein is Elongation factor Tu of Brachyspira hyodysenteriae (Treponema hyodysenteriae).